Consider the following 232-residue polypeptide: uncharacterized protein (232 aa).

Helical transmembrane passes span 17-37 (FLAK…VFAY), 54-74 (MSFM…SGAL), 84-104 (ALFL…FMIY), 107-127 (GSIV…SVYG), 138-158 (GSYL…NMFF), 161-181 (SGLN…LTAY), and 203-223 (MAVV…LYLL).

This sequence belongs to the BI1 family.

The protein resides in the cell membrane. This is an uncharacterized protein from Borreliella burgdorferi (strain ATCC 35210 / DSM 4680 / CIP 102532 / B31) (Borrelia burgdorferi).